The chain runs to 286 residues: 33 kDa chaperonin (286 aa).

Disulfide bonds link C225–C227 and C258–C261.

The protein belongs to the HSP33 family. Post-translationally, under oxidizing conditions two disulfide bonds are formed involving the reactive cysteines. Under reducing conditions zinc is bound to the reactive cysteines and the protein is inactive.

It is found in the cytoplasm. Functionally, redox regulated molecular chaperone. Protects both thermally unfolding and oxidatively damaged proteins from irreversible aggregation. Plays an important role in the bacterial defense system toward oxidative stress. This is 33 kDa chaperonin from Shewanella sediminis (strain HAW-EB3).